The primary structure comprises 433 residues: Enolase (433 aa).

Q166 is a binding site for (2R)-2-phosphoglycerate. E208 functions as the Proton donor in the catalytic mechanism. 3 residues coordinate Mg(2+): D245, E290, and D317. The (2R)-2-phosphoglycerate site is built by K342, R371, S372, and K393. K342 acts as the Proton acceptor in catalysis.

The protein belongs to the enolase family. The cofactor is Mg(2+).

It is found in the cytoplasm. The protein localises to the secreted. Its subcellular location is the cell surface. The catalysed reaction is (2R)-2-phosphoglycerate = phosphoenolpyruvate + H2O. The protein operates within carbohydrate degradation; glycolysis; pyruvate from D-glyceraldehyde 3-phosphate: step 4/5. Functionally, catalyzes the reversible conversion of 2-phosphoglycerate (2-PG) into phosphoenolpyruvate (PEP). It is essential for the degradation of carbohydrates via glycolysis. The sequence is that of Enolase from Clostridium novyi (strain NT).